The sequence spans 1034 residues: Teashirt homolog 2 (1034 aa).

Positions 1–90 (MPRRKQQAPK…NESLLSDASD (90 aa)) are disordered. Positions 13 to 38 (AGYAQEEQLKEEEEIKEEEEEEDSGS) form a coiled coil. Over residues 21 to 36 (LKEEEEIKEEEEEEDS) the composition is skewed to acidic residues. Positions 65–90 (SYQNSPGSHLSNQDAENESLLSDASD) are enriched in polar residues. Lys188 is covalently cross-linked (Glycyl lysine isopeptide (Lys-Gly) (interchain with G-Cter in SUMO2)). C2H2-type zinc fingers lie at residues 215–239 (FRCR…ETGH) and 275–299 (LKCM…KTKH). Residues 239 to 265 (HYQDDNRKKDKLRPTSYSKPRKRAFQD) are disordered. Residues Lys306 and Lys315 each participate in a glycyl lysine isopeptide (Lys-Gly) (interchain with G-Cter in SUMO2) cross-link. A C2H2-type 3; atypical zinc finger spans residues 380-404 (LKCMECGSSHDTLQQLTTHMMVTGH). Lys417 is covalently cross-linked (Glycyl lysine isopeptide (Lys-Gly) (interchain with G-Cter in SUMO2)). A compositionally biased stretch (polar residues) spans 432–455 (LSEAPNSDSLAPKPSSNSASDCTA). Positions 432–496 (LSEAPNSDSL…PLQKPLDPTI (65 aa)) are disordered. The span at 459-482 (ELKKESKKERPEETSKDEKVVKSE) shows a compositional bias: basic and acidic residues. Glycyl lysine isopeptide (Lys-Gly) (interchain with G-Cter in SUMO2) cross-links involve residues Lys461, Lys480, Lys497, Lys601, and Lys652. Disordered regions lie at residues 598 to 676 (TQVK…TSAL) and 763 to 789 (QPID…PPQK). A compositionally biased stretch (basic and acidic residues) spans 600–668 (VKKESEDKDE…KEGSEKEKPQ (69 aa)). Glycyl lysine isopeptide (Lys-Gly) (interchain with G-Cter in SUMO2) cross-links involve residues Lys800 and Lys820. The segment at residues 841–911 (RKGRQSNWNP…NVKYQLRKTG (71 aa)) is a DNA-binding region (homeobox; atypical). The segment at 926-948 (FYCSDCASQFRTPSTYISHLESH) adopts a C2H2-type 4 zinc-finger fold. A Glycyl lysine isopeptide (Lys-Gly) (interchain with G-Cter in SUMO2) cross-link involves residue Lys966. Phosphoserine is present on Ser980. Residues 994-1017 (FKCKLCCRTFVSKHAVKLHLSKTH) form a C2H2-type 5 zinc finger. The interval 1014-1034 (SKTHSKSPEHHSQFVTDVDEE) is disordered.

It belongs to the teashirt C2H2-type zinc-finger protein family. In terms of assembly, interacts (via homeobox domain) with APBB1 (via PID domain 1). Sumoylated. As to expression, expressed in brain; strongly reduced in post-mortem elderly subjects with Alzheimer disease.

It localises to the nucleus. Functionally, probable transcriptional regulator involved in developmental processes. May act as a transcriptional repressor (Potential). This is Teashirt homolog 2 (TSHZ2) from Homo sapiens (Human).